The chain runs to 348 residues: Protein RecA (348 aa).

64-71 (GPESSGKT) contributes to the ATP binding site. A compositionally biased stretch (basic and acidic residues) spans 325–335 (YEIDGSSKEPL). Residues 325–348 (YEIDGSSKEPLDEKEETLSLLDDE) form a disordered region.

This sequence belongs to the RecA family.

The protein resides in the cytoplasm. Can catalyze the hydrolysis of ATP in the presence of single-stranded DNA, the ATP-dependent uptake of single-stranded DNA by duplex DNA, and the ATP-dependent hybridization of homologous single-stranded DNAs. It interacts with LexA causing its activation and leading to its autocatalytic cleavage. This chain is Protein RecA, found in Listeria monocytogenes serotype 1/2a (strain 10403S).